We begin with the raw amino-acid sequence, 302 residues long: N-acetylmuramic acid 6-phosphate etherase (302 aa).

Residues 58–221 form the SIS domain; that stretch reads IGKAFLNGGR…STGAMVKTGK (164 aa). Glutamate 86 functions as the Proton donor in the catalytic mechanism. Glutamate 117 is an active-site residue.

This sequence belongs to the GCKR-like family. MurNAc-6-P etherase subfamily. In terms of assembly, homodimer.

The enzyme catalyses N-acetyl-D-muramate 6-phosphate + H2O = N-acetyl-D-glucosamine 6-phosphate + (R)-lactate. The protein operates within amino-sugar metabolism; N-acetylmuramate degradation. Specifically catalyzes the cleavage of the D-lactyl ether substituent of MurNAc 6-phosphate, producing GlcNAc 6-phosphate and D-lactate. This is N-acetylmuramic acid 6-phosphate etherase from Clostridium botulinum (strain Loch Maree / Type A3).